The primary structure comprises 320 residues: Lipoyl synthase (320 aa).

Basic and acidic residues predominate over residues 1-29; the sequence is MIGKLVRDLKIPDQRHPEKAHRPDNDQPR. Residues 1-32 form a disordered region; it reads MIGKLVRDLKIPDQRHPEKAHRPDNDQPRKPS. Cysteine 60, cysteine 65, cysteine 71, cysteine 86, cysteine 90, cysteine 93, and serine 300 together coordinate [4Fe-4S] cluster. The Radical SAM core domain occupies 71–289; sequence CWGQGHATMM…EKAAYGKGFL (219 aa).

Belongs to the radical SAM superfamily. Lipoyl synthase family. [4Fe-4S] cluster is required as a cofactor.

It localises to the cytoplasm. It carries out the reaction [[Fe-S] cluster scaffold protein carrying a second [4Fe-4S](2+) cluster] + N(6)-octanoyl-L-lysyl-[protein] + 2 oxidized [2Fe-2S]-[ferredoxin] + 2 S-adenosyl-L-methionine + 4 H(+) = [[Fe-S] cluster scaffold protein] + N(6)-[(R)-dihydrolipoyl]-L-lysyl-[protein] + 4 Fe(3+) + 2 hydrogen sulfide + 2 5'-deoxyadenosine + 2 L-methionine + 2 reduced [2Fe-2S]-[ferredoxin]. The protein operates within protein modification; protein lipoylation via endogenous pathway; protein N(6)-(lipoyl)lysine from octanoyl-[acyl-carrier-protein]: step 2/2. Catalyzes the radical-mediated insertion of two sulfur atoms into the C-6 and C-8 positions of the octanoyl moiety bound to the lipoyl domains of lipoate-dependent enzymes, thereby converting the octanoylated domains into lipoylated derivatives. This chain is Lipoyl synthase, found in Cereibacter sphaeroides (strain ATCC 17025 / ATH 2.4.3) (Rhodobacter sphaeroides).